The sequence spans 255 residues: MSIRVIIAGFKGKMGQAACQMVLTDPDLDLVAVLDPFESESEWQDIPVFKDKADLAGFEADVWVDFTTPAVAYENTRFALENGFAPVVGTTGFTSEEIAELKEFSRAQDLGGLIAPNFALGAVLLMQFATQAAKYFPNVEIIELHHDKKKDAPSGTAIKTAELMAEVRESIQQGAADEEELIAGARGADFDGMRIHSVRLPGLVAHQEVIFGNQGEGLTLRHDSYDRISFMTGVNLGIKEVVKRHELVYGLEHLL.

NAD(+)-binding positions include glycine 9–methionine 14, aspartate 35, glycine 89–threonine 91, and alanine 115–phenylalanine 118. The active-site Proton donor/acceptor is histidine 145. Position 146 (histidine 146) interacts with (S)-2,3,4,5-tetrahydrodipicolinate. Residue lysine 149 is the Proton donor of the active site. Glycine 155–threonine 156 is a (S)-2,3,4,5-tetrahydrodipicolinate binding site.

This sequence belongs to the DapB family.

The protein localises to the cytoplasm. The enzyme catalyses (S)-2,3,4,5-tetrahydrodipicolinate + NAD(+) + H2O = (2S,4S)-4-hydroxy-2,3,4,5-tetrahydrodipicolinate + NADH + H(+). It carries out the reaction (S)-2,3,4,5-tetrahydrodipicolinate + NADP(+) + H2O = (2S,4S)-4-hydroxy-2,3,4,5-tetrahydrodipicolinate + NADPH + H(+). It participates in amino-acid biosynthesis; L-lysine biosynthesis via DAP pathway; (S)-tetrahydrodipicolinate from L-aspartate: step 4/4. Functionally, catalyzes the conversion of 4-hydroxy-tetrahydrodipicolinate (HTPA) to tetrahydrodipicolinate. This is 4-hydroxy-tetrahydrodipicolinate reductase from Streptococcus pneumoniae serotype 19F (strain G54).